Here is a 207-residue protein sequence, read N- to C-terminus: NADH-quinone oxidoreductase subunit C (207 aa).

The protein belongs to the complex I 30 kDa subunit family. In terms of assembly, NDH-1 is composed of 14 different subunits. Subunits NuoB, C, D, E, F, and G constitute the peripheral sector of the complex.

It localises to the cell inner membrane. The catalysed reaction is a quinone + NADH + 5 H(+)(in) = a quinol + NAD(+) + 4 H(+)(out). Functionally, NDH-1 shuttles electrons from NADH, via FMN and iron-sulfur (Fe-S) centers, to quinones in the respiratory chain. The immediate electron acceptor for the enzyme in this species is believed to be ubiquinone. Couples the redox reaction to proton translocation (for every two electrons transferred, four hydrogen ions are translocated across the cytoplasmic membrane), and thus conserves the redox energy in a proton gradient. The sequence is that of NADH-quinone oxidoreductase subunit C from Bordetella pertussis (strain Tohama I / ATCC BAA-589 / NCTC 13251).